A 450-amino-acid chain; its full sequence is Carbamoyl phosphate synthase arginine-specific small chain (450 aa).

A mitochondrion-targeting transit peptide spans 1–29; it reads MFAARLFKAMPARASAFPSVNASIQSRFM. Residues 220-407 enclose the Glutamine amidotransferase type-1 domain; it reads HVAVIDCGVK…LDSVRKYKAS (188 aa). Catalysis depends on Cys296, which acts as the Nucleophile. Residues His380 and Glu382 contribute to the active site.

The protein belongs to the CarA family. Heterodimer composed of 2 chains; the small (or glutamine) chain promotes the hydrolysis of glutamine to ammonia, which is used by the large (or ammonia) chain to synthesize carbamoyl phosphate.

Its subcellular location is the mitochondrion matrix. It carries out the reaction hydrogencarbonate + L-glutamine + 2 ATP + H2O = carbamoyl phosphate + L-glutamate + 2 ADP + phosphate + 2 H(+). The catalysed reaction is L-glutamine + H2O = L-glutamate + NH4(+). It functions in the pathway amino-acid biosynthesis; L-arginine biosynthesis; carbamoyl phosphate from bicarbonate: step 1/1. Its function is as follows. Small subunit of the arginine-specific carbamoyl phosphate synthase (CPSase). CPSase catalyzes the formation of carbamoyl phosphate from the ammonia moiety of glutamine, carbonate, and phosphate donated by ATP, the first step of the arginine biosynthetic pathway. The small subunit (glutamine amidotransferase) binds and cleaves glutamine to supply the large subunit with the substrate ammonia. The protein is Carbamoyl phosphate synthase arginine-specific small chain (cpa1) of Aspergillus oryzae (strain ATCC 42149 / RIB 40) (Yellow koji mold).